We begin with the raw amino-acid sequence, 270 residues long: MPELPEVETTVRGLRPPLEGRRLTRVETRRADLRRPFPADLRQRMTGATITGLGRRAKYGLIETDRGDVMVFHLGMSGRWRIDPSEIGAHDHLVLETDEGRTLSLCDPRRFGSVDLVRGEELAGFGPFKALGPEPLGPDLTGAHLAGALEGRVAPIKAMLLDQRIVAGLGNIYVCEALHMTGIAPTTMAGRIAKKRLDRLVDSIREVLAAAIEAGGSTLRDYARPDGELGYFAKQWRVYGREGEPCHCGTVIRRRVDGGRSTFYCPKCQK.

The active-site Schiff-base intermediate with DNA is the Pro2. The active-site Proton donor is Glu3. The active-site Proton donor; for beta-elimination activity is the Lys58. DNA is bound by residues His90, Arg109, and Arg152. An FPG-type zinc finger spans residues 237–270; sequence RVYGREGEPCHCGTVIRRRVDGGRSTFYCPKCQK. Arg260 acts as the Proton donor; for delta-elimination activity in catalysis.

Belongs to the FPG family. As to quaternary structure, monomer. Requires Zn(2+) as cofactor.

The enzyme catalyses Hydrolysis of DNA containing ring-opened 7-methylguanine residues, releasing 2,6-diamino-4-hydroxy-5-(N-methyl)formamidopyrimidine.. The catalysed reaction is 2'-deoxyribonucleotide-(2'-deoxyribose 5'-phosphate)-2'-deoxyribonucleotide-DNA = a 3'-end 2'-deoxyribonucleotide-(2,3-dehydro-2,3-deoxyribose 5'-phosphate)-DNA + a 5'-end 5'-phospho-2'-deoxyribonucleoside-DNA + H(+). Functionally, involved in base excision repair of DNA damaged by oxidation or by mutagenic agents. Acts as a DNA glycosylase that recognizes and removes damaged bases. Has a preference for oxidized purines, such as 7,8-dihydro-8-oxoguanine (8-oxoG). Has AP (apurinic/apyrimidinic) lyase activity and introduces nicks in the DNA strand. Cleaves the DNA backbone by beta-delta elimination to generate a single-strand break at the site of the removed base with both 3'- and 5'-phosphates. The polypeptide is Formamidopyrimidine-DNA glycosylase (Rhizorhabdus wittichii (strain DSM 6014 / CCUG 31198 / JCM 15750 / NBRC 105917 / EY 4224 / RW1) (Sphingomonas wittichii)).